A 149-amino-acid chain; its full sequence is Ribosomal RNA large subunit methyltransferase H (149 aa).

S-adenosyl-L-methionine contacts are provided by residues leucine 71, glycine 98, and 117–122 (LSKMTL).

Belongs to the RNA methyltransferase RlmH family. As to quaternary structure, homodimer.

The protein localises to the cytoplasm. It carries out the reaction pseudouridine(1915) in 23S rRNA + S-adenosyl-L-methionine = N(3)-methylpseudouridine(1915) in 23S rRNA + S-adenosyl-L-homocysteine + H(+). In terms of biological role, specifically methylates the pseudouridine at position 1915 (m3Psi1915) in 23S rRNA. The sequence is that of Ribosomal RNA large subunit methyltransferase H from Campylobacter fetus subsp. fetus (strain 82-40).